Consider the following 366-residue polypeptide: Ribosomal RNA large subunit methyltransferase M (366 aa).

S-adenosyl-L-methionine contacts are provided by residues S188, C221 to G224, D240, D260, and D277. Catalysis depends on K306, which acts as the Proton acceptor.

Belongs to the class I-like SAM-binding methyltransferase superfamily. RNA methyltransferase RlmE family. RlmM subfamily. Monomer.

Its subcellular location is the cytoplasm. The catalysed reaction is cytidine(2498) in 23S rRNA + S-adenosyl-L-methionine = 2'-O-methylcytidine(2498) in 23S rRNA + S-adenosyl-L-homocysteine + H(+). Its function is as follows. Catalyzes the 2'-O-methylation at nucleotide C2498 in 23S rRNA. The chain is Ribosomal RNA large subunit methyltransferase M from Salmonella newport (strain SL254).